The chain runs to 183 residues: MDIDPYKEFGASVELLSFLPSDFFPSVRDLLDTASALYREALESPEHCSPHHTAIRQAILCWVELMTLASWVGQNLQDQASRDLVVNYVNTNMGLKIRQLLWFHISCLTFEREVVLEYLVSFGVWIRTPPAYRPPNAPILSTLPETTVIRRRGRSPRRRTPSPRRRRSQSPRRRRSQSREPQC.

The interval 143–183 (LPETTVIRRRGRSPRRRTPSPRRRRSQSPRRRRSQSREPQC) is disordered. Residues 149–176 (IRRRGRSPRRRTPSPRRRRSQSPRRRRS) are compositionally biased toward basic residues. Ser155, Ser162, and Ser170 each carry phosphoserine; by host. One copy of the 1; half-length repeat lies at 155-161 (SPRRRTP). The segment at 155–177 (SPRRRTPSPRRRRSQSPRRRRSQ) is 3 X 8 AA repeats of S-P-R-R-R-[PR]-S-Q. Residues 158-175 (RRTPSPRRRRSQSPRRRR) carry the Bipartite nuclear localization signal motif. 2 consecutive repeat copies span residues 162–169 (SPRRRRSQ) and 170–177 (SPRRRRSQ). Positions 177–183 (QSREPQC) are RNA binding.

The protein belongs to the orthohepadnavirus core antigen family. As to quaternary structure, homodimerizes, then multimerizes. Interacts with cytosol exposed regions of viral L glycoprotein present in the reticulum-to-Golgi compartment. Interacts with human FLNB. Phosphorylated form interacts with host importin alpha; this interaction depends on the exposure of the NLS, which itself depends upon genome maturation and/or phosphorylation of the capsid protein. Interacts with host NUP153. In terms of processing, phosphorylated by host SRPK1, SRPK2, and maybe protein kinase C or GAPDH. Phosphorylation is critical for pregenomic RNA packaging. Protein kinase C phosphorylation is stimulated by HBx protein and may play a role in transport of the viral genome to the nucleus at the late step during the viral replication cycle.

Its subcellular location is the virion. It localises to the host cytoplasm. Self assembles to form an icosahedral capsid. Most capsids appear to be large particles with an icosahedral symmetry of T=4 and consist of 240 copies of capsid protein, though a fraction forms smaller T=3 particles consisting of 180 capsid proteins. Entering capsids are transported along microtubules to the nucleus. Phosphorylation of the capsid is thought to induce exposure of nuclear localization signal in the C-terminal portion of the capsid protein that allows binding to the nuclear pore complex via the importin (karyopherin-) alpha and beta. Capsids are imported in intact form through the nuclear pore into the nuclear basket, where it probably binds NUP153. Only capsids that contain the mature viral genome can release the viral DNA and capsid protein into the nucleoplasm. Immature capsids get stuck in the basket. Capsids encapsulate the pre-genomic RNA and the P protein. Pre-genomic RNA is reverse-transcribed into DNA while the capsid is still in the cytoplasm. The capsid can then either be directed to the nucleus, providing more genomes for transcription, or bud through the endoplasmic reticulum to provide new virions. The sequence is that of Capsid protein from Hepatitis B virus genotype B1 (isolate Japan/Ry30/2002) (HBV-B).